The following is a 462-amino-acid chain: 3-ketoacyl-CoA thiolase 2, peroxisomal (462 aa).

The transit peptide at 1-34 (MEKAIERQRVLLEHLRPSSSSSHNYEASLSASAC) directs the protein to the peroxisome. Cys-138 functions as the Acyl-thioester intermediate in the catalytic mechanism. Cysteines 138 and 192 form a disulfide. Residues His-393 and Cys-425 each act as proton acceptor in the active site.

This sequence belongs to the thiolase-like superfamily. Thiolase family. Forms homodimers. As to expression, accumulates in etiolated cotyledons and in seedlings, also present in roots, flowers and siliques (at protein level). High levels in wounded leaves.

It localises to the peroxisome. The protein localises to the glyoxysome. The catalysed reaction is an acyl-CoA + acetyl-CoA = a 3-oxoacyl-CoA + CoA. It participates in lipid metabolism; fatty acid metabolism. Functionally, involved in long chain fatty-acid beta-oxidation prior to gluconeogenesis during germination and subsequent seedling growth. Confers sensitivity to 2,4-dichlorophenoxybutiric acid (2,4-DB). Required for local and systemic induction of jasmonic acid (JA) biosynthesis after wounding. Seems to be involved in JA biosynthesis during senescence. May be involved in the positive regulation of abscisic acid-activated signaling pathway. This Arabidopsis thaliana (Mouse-ear cress) protein is 3-ketoacyl-CoA thiolase 2, peroxisomal (PED1).